We begin with the raw amino-acid sequence, 228 residues long: Ribulose-phosphate 3-epimerase, cytoplasmic isoform (228 aa).

Ser12 contacts substrate. Residues His37, Asp39, and His70 each contribute to the a divalent metal cation site. The active-site Proton acceptor is Asp39. Residues His70, 150-153 (GFGG), 179-181 (DGG), and 201-202 (GS) each bind substrate. Asp179 is an a divalent metal cation binding site. The active-site Proton donor is Asp179.

The protein belongs to the ribulose-phosphate 3-epimerase family. As to quaternary structure, homodimer. It depends on Co(2+) as a cofactor. Fe(2+) is required as a cofactor. Requires Mn(2+) as cofactor. Zn(2+) serves as cofactor. Predominantly accumulates in roots and seedlings.

It localises to the cytoplasm. It carries out the reaction D-ribulose 5-phosphate = D-xylulose 5-phosphate. It functions in the pathway carbohydrate degradation; pentose phosphate pathway; D-xylulose 5-phosphate from D-ribulose 5-phosphate (non-oxidative stage): step 1/1. Catalyzes the reversible epimerization of D-ribulose 5-phosphate to D-xylulose 5-phosphate. This is Ribulose-phosphate 3-epimerase, cytoplasmic isoform from Oryza sativa subsp. japonica (Rice).